We begin with the raw amino-acid sequence, 94 residues long: Large ribosomal subunit protein bL25 (94 aa).

The protein belongs to the bacterial ribosomal protein bL25 family. Part of the 50S ribosomal subunit; part of the 5S rRNA/L5/L18/L25 subcomplex. Contacts the 5S rRNA. Binds to the 5S rRNA independently of L5 and L18.

This is one of the proteins that binds to the 5S RNA in the ribosome where it forms part of the central protuberance. The sequence is that of Large ribosomal subunit protein bL25 from Pectobacterium carotovorum subsp. carotovorum (strain PC1).